The primary structure comprises 253 residues: Sulfate transporter CysZ (253 aa).

A run of 4 helical transmembrane segments spans residues 31–51, 75–95, 151–171, and 222–242; these read FVILPLLVNILLMGGAFWWLF, LLWPLAVISVLLVFGYFFSTI, IVLLILYFIPGIGQTVAPVLW, and IPLLNLFIMPVAVCGATAMWV.

The protein belongs to the CysZ family.

Its subcellular location is the cell inner membrane. In terms of biological role, high affinity, high specificity proton-dependent sulfate transporter, which mediates sulfate uptake. Provides the sulfur source for the cysteine synthesis pathway. The protein is Sulfate transporter CysZ of Shigella flexneri.